A 306-amino-acid polypeptide reads, in one-letter code: Tyrosine recombinase EUBREC_2677 (306 aa).

One can recognise a Core-binding (CB) domain in the interval 2–84; the sequence is NNLQTHISSY…SIKAFFHYLE (83 aa). The Tyr recombinase domain occupies 106 to 296; the sequence is ILPKTIPLYI…AVSKQKDILI (191 aa). Catalysis depends on residues Arg155, Lys179, His248, Arg251, and His274. The active-site O-(3'-phospho-DNA)-tyrosine intermediate is Tyr283.

It belongs to the 'phage' integrase family.

The protein resides in the cytoplasm. In terms of biological role, site-specific tyrosine recombinase, which acts by catalyzing the cutting and rejoining of the recombining DNA molecules. In Agathobacter rectalis (strain ATCC 33656 / DSM 3377 / JCM 17463 / KCTC 5835 / VPI 0990) (Eubacterium rectale), this protein is Tyrosine recombinase EUBREC_2677.